The sequence spans 63 residues: Large ribosomal subunit protein uL30 (63 aa).

This sequence belongs to the universal ribosomal protein uL30 family. As to quaternary structure, part of the 50S ribosomal subunit.

This Stenotrophomonas maltophilia (strain K279a) protein is Large ribosomal subunit protein uL30.